Here is a 512-residue protein sequence, read N- to C-terminus: GMP synthase [glutamine-hydrolyzing] (512 aa).

In terms of domain architecture, Glutamine amidotransferase type-1 spans 7–197 (TIIVLDFGSQ…VFGVCGCSEG (191 aa)). The active-site Nucleophile is C84. Active-site residues include H171 and E173. Residues 198–387 (WNMENFIEVE…LGIPDEIVWR (190 aa)) enclose the GMPS ATP-PPase domain. 225–231 (SGGVDSS) serves as a coordination point for ATP.

Homodimer.

The enzyme catalyses XMP + L-glutamine + ATP + H2O = GMP + L-glutamate + AMP + diphosphate + 2 H(+). Its pathway is purine metabolism; GMP biosynthesis; GMP from XMP (L-Gln route): step 1/1. Catalyzes the synthesis of GMP from XMP. This Bacillus anthracis protein is GMP synthase [glutamine-hydrolyzing].